The following is a 237-amino-acid chain: Uridylate kinase (237 aa).

Lys-11 to Gly-14 serves as a coordination point for ATP. Gly-53 is a UMP binding site. Gly-54 and Arg-58 together coordinate ATP. Residues Asp-73 and Thr-134–Thr-141 each bind UMP. Positions 161, 167, and 170 each coordinate ATP.

Belongs to the UMP kinase family. Homohexamer.

Its subcellular location is the cytoplasm. The enzyme catalyses UMP + ATP = UDP + ADP. It functions in the pathway pyrimidine metabolism; CTP biosynthesis via de novo pathway; UDP from UMP (UMPK route): step 1/1. Its activity is regulated as follows. Inhibited by UTP. Its function is as follows. Catalyzes the reversible phosphorylation of UMP to UDP. The chain is Uridylate kinase from Burkholderia mallei (strain NCTC 10247).